The primary structure comprises 1144 residues: Formin-like protein 18 (1144 aa).

A Phosphatase tensin-type domain is found at 17-193 (LEISERVYVF…QYISRRNVGS (177 aa)). Catalysis depends on cysteine 126, which acts as the Phosphocysteine intermediate. Residues 199–338 (DQALTLDCVN…FSAEVIFSEM (140 aa)) enclose the C2 tensin-type domain. Disordered stretches follow at residues 429-463 (ISEN…SILK) and 482-729 (KIFS…KGRG). Residues 441-450 (SPEKEKDTMS) are compositionally biased toward basic and acidic residues. The span at 491 to 522 (SPVTSPLPNRSPTQGSPASISRFHSSPSSLGI) shows a compositional bias: polar residues. Positions 526–536 (LHDHGSCKDEE) are enriched in basic and acidic residues. The span at 538 to 548 (TSSSPASPSIS) shows a compositional bias: low complexity. Over residues 555 to 580 (PLTSSQPKKASPQCPQSPTPVHSNGP) the composition is skewed to polar residues. Positions 603-613 (RPPPPPPPPPI) are enriched in pro residues. Residues 614 to 629 (SSLRSTPSPSSTSNSI) show a composition bias toward low complexity. Residues 633–643 (GPPPPPPPPPL) show a composition bias toward pro residues. The span at 644–653 (QSHRSALSSS) shows a compositional bias: low complexity. The span at 669–678 (NPPPPPPPPL) shows a compositional bias: pro residues. Over residues 679–695 (HSNSRMGAPTSSLVLKS) the composition is skewed to low complexity. Residues 696–705 (PPVPPPPAPA) show a composition bias toward pro residues. The FH2 domain occupies 735-1135 (KGQGQTRKAN…RAQKEAENEK (401 aa)).

The protein belongs to the formin-like family. Class-II subfamily.

The sequence is that of Formin-like protein 18 (FH18) from Arabidopsis thaliana (Mouse-ear cress).